We begin with the raw amino-acid sequence, 120 residues long: Transmembrane protein 010R (120 aa).

The next 2 membrane-spanning stretches (helical) occupy residues 40 to 60 (FCGA…ATAT) and 72 to 92 (SIFF…VWFL).

The protein belongs to the IIV-6 010R family.

It is found in the membrane. This chain is Transmembrane protein 010R, found in Invertebrate iridescent virus 6 (IIV-6).